Here is a 421-residue protein sequence, read N- to C-terminus: Cell division protein FtsZ (421 aa).

Residues 26-30, 132-134, Glu163, Arg167, and Asn211 contribute to the GTP site; these read GGGGN and GTG.

The protein belongs to the FtsZ family. In terms of assembly, homodimer. Polymerizes to form a dynamic ring structure in a strictly GTP-dependent manner. Interacts directly with several other division proteins.

Its subcellular location is the cytoplasm. Its function is as follows. Essential cell division protein that forms a contractile ring structure (Z ring) at the future cell division site. The regulation of the ring assembly controls the timing and the location of cell division. One of the functions of the FtsZ ring is to recruit other cell division proteins to the septum to produce a new cell wall between the dividing cells. Binds GTP and shows GTPase activity. This Haemophilus influenzae (strain ATCC 51907 / DSM 11121 / KW20 / Rd) protein is Cell division protein FtsZ.